Reading from the N-terminus, the 221-residue chain is Transcriptional regulator GfcR (221 aa).

Residues 35 to 59 (ASWLVERSQPTDNSQSSSANNPTEA) are disordered. Residues 42 to 57 (SQPTDNSQSSSANNPT) show a composition bias toward polar residues.

This sequence belongs to the purine/pyrimidine phosphoribosyltransferase family. GfcR subfamily.

Its function is as follows. DNA-binding transcriptional regulator that functions as a regulator of central sugar catabolic pathways. This Haloquadratum walsbyi (strain DSM 16790 / HBSQ001) protein is Transcriptional regulator GfcR.